Reading from the N-terminus, the 354-residue chain is Virulence plasmid protein pGP2-D (354 aa).

The sequence is that of Virulence plasmid protein pGP2-D from Chlamydia trachomatis serovar L2 (strain ATCC VR-902B / DSM 19102 / 434/Bu).